Consider the following 136-residue polypeptide: Large ribosomal subunit protein uL16 (136 aa).

This sequence belongs to the universal ribosomal protein uL16 family. As to quaternary structure, part of the 50S ribosomal subunit.

Functionally, binds 23S rRNA and is also seen to make contacts with the A and possibly P site tRNAs. In Haemophilus ducreyi (strain 35000HP / ATCC 700724), this protein is Large ribosomal subunit protein uL16.